The primary structure comprises 300 residues: MRKYTHYHIPVMVREVIEYLKPEDEKIILDCTVGEGGHARAILEHCPGCKLIGIDVDSEVLQIAEKKLKDFSDRVSLFKASYRDADFLLKTLEIEKVDGILLDLGVSTYQLKGENRGFTFEREEPLDMRMDLESEITAQKVLNELSEEELARIIFEYGEEKRYARRIARKIVENRPLNTTLDLVKAVSEALPSHEIRRRKRHFATRTFQAIRIYVNRELENLREFLLNKAEKLLRVGGRIVVISFHSLEDRIVKEAFRNSRKLRILTEKPVRPSEEEVRENPRSRSARLRAAELVEEGGD.

S-adenosyl-L-methionine contacts are provided by residues 36–38 (GGH), Asp55, Leu89, Asp103, and Gln110.

The protein belongs to the methyltransferase superfamily. RsmH family.

Its subcellular location is the cytoplasm. The enzyme catalyses cytidine(1402) in 16S rRNA + S-adenosyl-L-methionine = N(4)-methylcytidine(1402) in 16S rRNA + S-adenosyl-L-homocysteine + H(+). Its function is as follows. Specifically methylates the N4 position of cytidine in position 1402 (C1402) of 16S rRNA. This Thermotoga neapolitana (strain ATCC 49049 / DSM 4359 / NBRC 107923 / NS-E) protein is Ribosomal RNA small subunit methyltransferase H.